Here is a 140-residue protein sequence, read N- to C-terminus: Nucleoside diphosphate kinase (140 aa).

ATP-binding residues include Lys11, Phe59, Arg87, Thr93, Arg104, and Asn114. The Pros-phosphohistidine intermediate role is filled by His117.

This sequence belongs to the NDK family. As to quaternary structure, homotetramer. Mg(2+) serves as cofactor.

It localises to the cytoplasm. The enzyme catalyses a 2'-deoxyribonucleoside 5'-diphosphate + ATP = a 2'-deoxyribonucleoside 5'-triphosphate + ADP. It carries out the reaction a ribonucleoside 5'-diphosphate + ATP = a ribonucleoside 5'-triphosphate + ADP. Major role in the synthesis of nucleoside triphosphates other than ATP. The ATP gamma phosphate is transferred to the NDP beta phosphate via a ping-pong mechanism, using a phosphorylated active-site intermediate. In Acidiphilium cryptum (strain JF-5), this protein is Nucleoside diphosphate kinase.